The sequence spans 316 residues: GTP cyclohydrolase FolE2 1 (316 aa).

It belongs to the GTP cyclohydrolase IV family.

It carries out the reaction GTP + H2O = 7,8-dihydroneopterin 3'-triphosphate + formate + H(+). It participates in cofactor biosynthesis; 7,8-dihydroneopterin triphosphate biosynthesis; 7,8-dihydroneopterin triphosphate from GTP: step 1/1. Its function is as follows. Converts GTP to 7,8-dihydroneopterin triphosphate. The sequence is that of GTP cyclohydrolase FolE2 1 from Burkholderia lata (strain ATCC 17760 / DSM 23089 / LMG 22485 / NCIMB 9086 / R18194 / 383).